A 74-amino-acid polypeptide reads, in one-letter code: UPF0435 protein BcerKBAB4_0386 (74 aa).

The protein belongs to the UPF0435 family.

This chain is UPF0435 protein BcerKBAB4_0386, found in Bacillus mycoides (strain KBAB4) (Bacillus weihenstephanensis).